A 221-amino-acid polypeptide reads, in one-letter code: Secreted protein BARF1 (221 aa).

Residues 1–20 form the signal peptide; it reads MARFIAQLLLLASCVAAGQA. Ig-like domains follow at residues 21–120 and 124–220; these read VTAF…EHLS and PLTL…GYLS. Asn95 carries N-linked (GlcNAc...) asparagine; by host glycosylation. Cysteines 146 and 201 form a disulfide.

In terms of assembly, homohexamer. Interacts with human CSF1. In terms of processing, phosphorylated on serine and threonine by host.

It localises to the secreted. Functionally, plays diverse functions in immunomodulation and oncogenicity, maybe by acting as a functional receptor for human CSF1. May inhibit interferon secretion from mononuclear cells. Exhibits oncogenic activity in vitro. This is Secreted protein BARF1 from Epstein-Barr virus (strain B95-8) (HHV-4).